We begin with the raw amino-acid sequence, 420 residues long: UDP-N-acetylglucosamine 1-carboxyvinyltransferase (420 aa).

22–23 contributes to the phosphoenolpyruvate binding site; that stretch reads KN. R92 is a UDP-N-acetyl-alpha-D-glucosamine binding site. C116 acts as the Proton donor in catalysis. C116 is modified (2-(S-cysteinyl)pyruvic acid O-phosphothioketal). UDP-N-acetyl-alpha-D-glucosamine is bound by residues 121-125, D304, and I326; that span reads RPVDQ.

This sequence belongs to the EPSP synthase family. MurA subfamily.

The protein resides in the cytoplasm. The catalysed reaction is phosphoenolpyruvate + UDP-N-acetyl-alpha-D-glucosamine = UDP-N-acetyl-3-O-(1-carboxyvinyl)-alpha-D-glucosamine + phosphate. It functions in the pathway cell wall biogenesis; peptidoglycan biosynthesis. Its function is as follows. Cell wall formation. Adds enolpyruvyl to UDP-N-acetylglucosamine. The sequence is that of UDP-N-acetylglucosamine 1-carboxyvinyltransferase from Paraburkholderia phytofirmans (strain DSM 17436 / LMG 22146 / PsJN) (Burkholderia phytofirmans).